We begin with the raw amino-acid sequence, 329 residues long: Galactosylgalactosylxylosylprotein 3-beta-glucuronosyltransferase 2 (329 aa).

The Cytoplasmic segment spans residues 1–2 (MK). Residues 3–23 (SALFSRFFILLPWILIVIIML) traverse the membrane as a helical; Signal-anchor for type II membrane protein segment. At 24 to 329 (DVDTRRPAPP…YRLDTVKIEV (306 aa)) the chain is on the lumenal side. Positions 45–87 (VGRGGARLPPRRGGPDSGPGRGWEKRNESRPHARPRPEPPLPT) are disordered. Basic and acidic residues predominate over residues 66–81 (GWEKRNESRPHARPRP). Asn71 carries an N-linked (GlcNAc...) asparagine glycan. UDP-alpha-D-glucuronate is bound by residues 93–95 (PTY), Asp124, Arg161, Arg166, and 191–193 (DDD). Position 193 (Asp193) interacts with Mn(2+). Positions 240–249 (WRADRPFAID) are interaction with galactose moiety of substrate glycoprotein. The Proton donor/acceptor role is filled by Glu279. N-linked (GlcNAc...) asparagine glycosylation is present at Asn298. 306–308 (HTR) is a UDP-alpha-D-glucuronate binding site.

This sequence belongs to the glycosyltransferase 43 family. In terms of assembly, homodimer. The cofactor is Mn(2+).

The protein localises to the golgi apparatus membrane. The enzyme catalyses 3-O-(beta-D-galactosyl-(1-&gt;3)-beta-D-galactosyl-(1-&gt;4)-beta-D-xylosyl)-L-seryl-[protein] + UDP-alpha-D-glucuronate = 3-O-(beta-D-GlcA-(1-&gt;3)-beta-D-Gal-(1-&gt;3)-beta-D-Gal-(1-&gt;4)-beta-D-Xyl)-L-seryl-[protein] + UDP + H(+). Its pathway is protein modification; protein glycosylation. In terms of biological role, involved in the biosynthesis of L2/HNK-1 carbohydrate epitope on both glycolipids and glycoproteins. The protein is Galactosylgalactosylxylosylprotein 3-beta-glucuronosyltransferase 2 (B3GAT2) of Canis lupus familiaris (Dog).